The primary structure comprises 277 residues: Caspase-3 (277 aa).

M1 bears the N-acetylmethionine mark. 2 propeptides span residues 1-9 (MENSENSVD) and 10-28 (AKSIKNSETKIFHGSKSMD). N6-acetyllysine is present on K11. S26 carries the post-translational modification Phosphoserine. Catalysis depends on residues H121 and C163. C163 is subject to S-nitrosocysteine; in inhibited form.

The protein belongs to the peptidase C14A family. Heterotetramer that consists of two anti-parallel arranged heterodimers, each one formed by a 17 kDa (p17) and a 12 kDa (p12) subunit. Interacts with BIRC6/bruce. Cleavage by granzyme B, caspase-6, caspase-8 and caspase-10 generates the two active subunits. Additional processing of the propeptides is likely due to the autocatalytic activity of the activated protease. Active heterodimers between the small subunit of caspase-7 protease and the large subunit of caspase-3 also occur and vice versa. In terms of processing, S-nitrosylated on its catalytic site cysteine in unstimulated cell lines and denitrosylated upon activation of the Fas apoptotic pathway, associated with an increase in intracellular caspase activity. Fas therefore activates caspase-3 not only by inducing the cleavage of the caspase zymogen to its active subunits, but also by stimulating the denitrosylation of its active site thiol. Post-translationally, ubiquitinated by BIRC6; this activity is inhibited by DIABLO/SMAC.

The protein localises to the cytoplasm. It catalyses the reaction Strict requirement for an Asp residue at positions P1 and P4. It has a preferred cleavage sequence of Asp-Xaa-Xaa-Asp-|- with a hydrophobic amino-acid residue at P2 and a hydrophilic amino-acid residue at P3, although Val or Ala are also accepted at this position.. With respect to regulation, inhibited by BIRC6; following inhibition of BIRC6-caspase binding by DIABLO/SMAC, BIRC6 is subjected to caspase cleavage, leading to an increase in active caspases. Its function is as follows. Involved in the activation cascade of caspases responsible for apoptosis execution. At the onset of apoptosis, it proteolytically cleaves poly(ADP-ribose) polymerase PARP1 at a '216-Asp-|-Gly-217' bond. Cleaves and activates sterol regulatory element binding proteins (SREBPs) between the basic helix-loop-helix leucine zipper domain and the membrane attachment domain. Cleaves and activates caspase-6, -7 and -9 (CASP6, CASP7 and CASP9, respectively). Cleaves and inactivates interleukin-18 (IL18). Triggers cell adhesion in sympathetic neurons through RET cleavage. Cleaves IL-1 beta between an Asp and an Ala, releasing the mature cytokine which is involved in a variety of inflammatory processes. Cleaves and inhibits serine/threonine-protein kinase AKT1 in response to oxidative stress. Acts as an inhibitor of type I interferon production during virus-induced apoptosis by mediating cleavage of antiviral proteins CGAS, IRF3 and MAVS, thereby preventing cytokine overproduction. Also involved in pyroptosis by mediating cleavage and activation of gasdermin-E (GSDME). Cleaves XRCC4 and phospholipid scramblase proteins XKR4, XKR8 and XKR9, leading to promote phosphatidylserine exposure on apoptotic cell surface. Cleaves BIRC6 following inhibition of BIRC6-caspase binding by DIABLO/SMAC. In Felis catus (Cat), this protein is Caspase-3 (CASP3).